Consider the following 858-residue polypeptide: KN motif and ankyrin repeat domain-containing protein 2 (858 aa).

The segment at 1–29 (MAQVLHVSAPFPGTPGPASPPAFPSKEPD) is disordered. The tract at residues 1 to 72 (MAQVLHVSAP…AVQRRPRLGS (72 aa)) is interaction with AIFM1. A compositionally biased stretch (pro residues) spans 12–23 (PGTPGPASPPAF). 5 positions are modified to phosphoserine: Ser19, Ser83, Ser86, Ser89, and Ser92. Arg105 is subject to Omega-N-methylarginine. Residues 140–182 (AAPAGLGSLTPSAAGSTSSLVGVGLPPPTPRGSGLSTPVPPSA) form a disordered region. Positions 148–159 (LTPSAAGSTSSL) are enriched in polar residues. A Phosphothreonine modification is found at Thr168. Coiled-coil stretches lie at residues 183 to 234 (GHLA…KSQK) and 282 to 313 (EAAL…QADL). Position 323 is a phosphoserine (Ser323). Thr329 is subject to Phosphothreonine. Ser356 and Ser375 each carry phosphoserine. Disordered stretches follow at residues 412–451 (CDGA…PAHD) and 488–590 (QKEE…SSAK). The segment covering 421-435 (APAESSLSPPESEGA) has biased composition (low complexity). Residues 436 to 446 (TQAQPEKNTGQ) show a composition bias toward polar residues. Positions 488–499 (QKEEPTDPEAHR) are enriched in basic and acidic residues. The segment covering 509-528 (GSISPRYESSSEDSSTAENF) has biased composition (low complexity). Ser547 is subject to Phosphoserine. The segment covering 555 to 569 (RPKETAKAKTSREES) has biased composition (basic and acidic residues). Phosphothreonine is present on Thr559. The stretch at 621–658 (RELKVAYTTVLQEWLRLACRSDAHPELVRRHLVTFRAM) is one ANK 0; degenerate repeat. ANK repeat units follow at residues 673–703 (NGNT…QVDK), 707–740 (AGYS…DVNA), 745–774 (AGQT…DVNV), 778–808 (DGST…DISI), and 812–842 (DGST…KCSF). Residues 676–842 (TALHYSVSHA…YSRMNIKCSF (167 aa)) form an interaction with NCOA1 region.

In terms of assembly, interacts (non-phosphorylated form) with NCOA1; NCOA2 AND NCOA3. Interacts with AIFM1. Interacts with ARHGDIA; the interaction is direct and may regulate the interaction of ARHGDIA with RHOA, RAC1 and CDC42. Interacts (via ANK repeats 1-5) with KIF21A. Phosphorylated by casein kinase II upon estrogen stimulation. Phosphorylation induces the release by KANK2 of NCOA1 and its translocation to the nucleus where NCOA1 can activate gene transcription.

It is found in the cytoplasm. It localises to the mitochondrion. In terms of biological role, involved in transcription regulation by sequestering in the cytoplasm nuclear receptor coactivators such as NCOA1, NCOA2 and NCOA3. Involved in regulation of caspase-independent apoptosis by sequestering the proapoptotic factor AIFM1 in mitochondria. Pro-apoptotic stimuli can induce its proteasomal degradation allowing the translocation of AIFM1 to the nucleus to induce apoptosis. Involved in the negative control of vitamin D receptor signaling pathway. Involved in actin stress fibers formation through its interaction with ARHGDIA and the regulation of the Rho signaling pathway. May thereby play a role in cell adhesion and migration, regulating for instance podocytes migration during development of the kidney. Through the Rho signaling pathway may also regulate cell proliferation. The polypeptide is KN motif and ankyrin repeat domain-containing protein 2 (KANK2) (Bos taurus (Bovine)).